The primary structure comprises 724 residues: WW domain-containing protein ZK1098.1 (724 aa).

2 consecutive WW domains span residues 78-111 (PSVE…KPDV) and 123-156 (QPQQ…KPDG). 6 FF domains span residues 224–282 (KKRQ…WKVQ), 295–349 (IKKS…CIDF), 353–422 (RDKE…HIKQ), 442–502 (QRKV…FVED), 507–562 (YTED…LIEK), and 578–632 (KRRL…YKNG). A disordered region spans residues 626–724 (FNHYKNGTSG…KRKRRESEAD (99 aa)). Positions 630–639 (KNGTSGTTAG) are enriched in polar residues. The segment covering 645 to 657 (KKKKKKDKKKKNK) has biased composition (basic residues). Basic and acidic residues predominate over residues 681-692 (SKEDRMDDEERG). Residues 693-703 (KKSKKSRKRSP) are compositionally biased toward basic residues.

In Caenorhabditis elegans, this protein is WW domain-containing protein ZK1098.1.